The sequence spans 146 residues: Large ribosomal subunit protein uL15 (146 aa).

Basic and acidic residues predominate over residues 1–18 (MKLHELKPSEGSRKERNR). Residues 1-50 (MKLHELKPSEGSRKERNRVGRGTGSGNGKTSGRGHKGQKARSGGGVRLGF) form a disordered region. The span at 21–31 (RGTGSGNGKTS) shows a compositional bias: gly residues.

This sequence belongs to the universal ribosomal protein uL15 family. In terms of assembly, part of the 50S ribosomal subunit.

Its function is as follows. Binds to the 23S rRNA. The protein is Large ribosomal subunit protein uL15 of Listeria welshimeri serovar 6b (strain ATCC 35897 / DSM 20650 / CCUG 15529 / CIP 8149 / NCTC 11857 / SLCC 5334 / V8).